A 126-amino-acid polypeptide reads, in one-letter code: Large ribosomal subunit protein uL22 (126 aa).

The protein belongs to the universal ribosomal protein uL22 family. In terms of assembly, part of the 50S ribosomal subunit.

In terms of biological role, this protein binds specifically to 23S rRNA; its binding is stimulated by other ribosomal proteins, e.g. L4, L17, and L20. It is important during the early stages of 50S assembly. It makes multiple contacts with different domains of the 23S rRNA in the assembled 50S subunit and ribosome. The globular domain of the protein is located near the polypeptide exit tunnel on the outside of the subunit, while an extended beta-hairpin is found that lines the wall of the exit tunnel in the center of the 70S ribosome. The sequence is that of Large ribosomal subunit protein uL22 from Cereibacter sphaeroides (strain ATCC 17029 / ATH 2.4.9) (Rhodobacter sphaeroides).